A 506-amino-acid chain; its full sequence is Probable alpha-L-arabinofuranosidase B (506 aa).

The N-terminal stretch at 1 to 26 (MLLPRGFNRAVVTALGVVGTGTLVAA) is a signal peptide. Residues 27–343 (GPCDIYSSGG…ANIVAAKYAV (317 aa)) form a catalytic region. 3 cysteine pairs are disulfide-bonded: Cys-29–Cys-39, Cys-89–Cys-94, and Cys-184–Cys-185. Asp-227 serves as a coordination point for substrate. The active-site Nucleophile is the Glu-229. Substrate is bound at residue Asn-230. Asn-285 is a glycosylation site (N-linked (GlcNAc...) asparagine). Gly-304 serves as a coordination point for substrate. Asp-305 (proton donor) is an active-site residue. Residues 344-506 (APLTSGPSLT…VSWVVSTSFA (163 aa)) form an ABD region. Asn-375 is a glycosylation site (N-linked (GlcNAc...) asparagine). A disulfide bridge connects residues Cys-409 and Cys-447. His-424, Phe-427, Asp-443, His-471, Leu-476, and Asp-496 together coordinate substrate.

This sequence belongs to the glycosyl hydrolase 54 family.

The protein resides in the secreted. The enzyme catalyses Hydrolysis of terminal non-reducing alpha-L-arabinofuranoside residues in alpha-L-arabinosides.. The protein operates within glycan metabolism; L-arabinan degradation. Alpha-L-arabinofuranosidase involved in the degradation of arabinoxylan, a major component of plant hemicellulose. Able to hydrolyze 1,5-, 1,3- and 1,2-alpha-linkages not only in L-arabinofuranosyl oligosaccharides, but also in polysaccharides containing terminal non-reducing L-arabinofuranoses in side chains, like L-arabinan, arabinogalactan and arabinoxylan. In Aspergillus terreus (strain NIH 2624 / FGSC A1156), this protein is Probable alpha-L-arabinofuranosidase B (abfB).